Reading from the N-terminus, the 290-residue chain is uncharacterized protein (290 aa).

The next 7 helical transmembrane spans lie at 40–60, 80–100, 110–130, 139–159, 166–188, 200–220, and 238–260; these read MHVI…SPVI, DAHV…YTCL, LFGY…YFVW, VHIT…VITF, MYYG…HYFL, MING…WGWF, and WALS…FWVS. The TLC domain maps to 74 to 271; the sequence is KTRLNWDAHV…MIDAIRRRAH (198 aa).

The protein localises to the endoplasmic reticulum membrane. This is an uncharacterized protein from Schizosaccharomyces pombe (strain 972 / ATCC 24843) (Fission yeast).